Consider the following 81-residue polypeptide: ATP synthase subunit c (81 aa).

Transmembrane regions (helical) follow at residues alanine 7 to glycine 27 and leucine 57 to alanine 77.

The protein belongs to the ATPase C chain family. In terms of assembly, F-type ATPases have 2 components, F(1) - the catalytic core - and F(0) - the membrane proton channel. F(1) has five subunits: alpha(3), beta(3), gamma(1), delta(1), epsilon(1). F(0) has four main subunits: a(1), b(1), b'(1) and c(10-14). The alpha and beta chains form an alternating ring which encloses part of the gamma chain. F(1) is attached to F(0) by a central stalk formed by the gamma and epsilon chains, while a peripheral stalk is formed by the delta, b and b' chains.

It localises to the cellular thylakoid membrane. Functionally, f(1)F(0) ATP synthase produces ATP from ADP in the presence of a proton or sodium gradient. F-type ATPases consist of two structural domains, F(1) containing the extramembraneous catalytic core and F(0) containing the membrane proton channel, linked together by a central stalk and a peripheral stalk. During catalysis, ATP synthesis in the catalytic domain of F(1) is coupled via a rotary mechanism of the central stalk subunits to proton translocation. Its function is as follows. Key component of the F(0) channel; it plays a direct role in translocation across the membrane. A homomeric c-ring of between 10-14 subunits forms the central stalk rotor element with the F(1) delta and epsilon subunits. This Synechococcus sp. (strain CC9311) protein is ATP synthase subunit c.